The following is a 112-amino-acid chain: UPF0102 protein C8J_0145 (112 aa).

The protein belongs to the UPF0102 family.

The sequence is that of UPF0102 protein C8J_0145 from Campylobacter jejuni subsp. jejuni serotype O:6 (strain 81116 / NCTC 11828).